The chain runs to 427 residues: L-threonine dehydratase biosynthetic IlvA (427 aa).

An N6-(pyridoxal phosphate)lysine modification is found at Lys-63. Residues Asn-90, 193-197, and Ser-319 contribute to the pyridoxal 5'-phosphate site; that span reads GGGGC. The region spanning 343–417 is the ACT-like domain; sequence HYFLVDFPQK…TEMHVETLQP (75 aa).

This sequence belongs to the serine/threonine dehydratase family. In terms of assembly, homotetramer. It depends on pyridoxal 5'-phosphate as a cofactor.

The enzyme catalyses L-threonine = 2-oxobutanoate + NH4(+). It participates in amino-acid biosynthesis; L-isoleucine biosynthesis; 2-oxobutanoate from L-threonine: step 1/1. Functionally, catalyzes the anaerobic formation of alpha-ketobutyrate and ammonia from threonine in a two-step reaction. The first step involved a dehydration of threonine and a production of enamine intermediates (aminocrotonate), which tautomerizes to its imine form (iminobutyrate). Both intermediates are unstable and short-lived. The second step is the nonenzymatic hydrolysis of the enamine/imine intermediates to form 2-ketobutyrate and free ammonia. In the low water environment of the cell, the second step is accelerated by RidA. The sequence is that of L-threonine dehydratase biosynthetic IlvA (ilvA) from Mycobacterium leprae (strain TN).